A 299-amino-acid chain; its full sequence is Taste receptor type 2 member 4 (299 aa).

Topologically, residues 1 to 9 (MLWLFYSSA) are extracellular. Residues 10-30 (IIASVILDFVGIIMSLFITVV) traverse the membrane as a helical segment. The Cytoplasmic segment spans residues 31–46 (NYKTWVKSHRISSSER). Residues 47–67 (ILFSLGITRFFMLALFLVNTI) traverse the membrane as a helical segment. At 68–81 (YFVSSNKERSVYLS) the chain is on the extracellular side. A helical membrane pass occupies residues 82 to 102 (AFFVLCFMFLDSSSLWFVTLL). At 103 to 131 (NSLYCVKITNFQHSVFLLLKRNISPKIPR) the chain is on the cytoplasmic side. Residues 132–152 (LLPACVLISAFTTCLYITLSQ) form a helical membrane-spanning segment. The Extracellular segment spans residues 153–172 (ASPFPELVTKRNNTSFNISE). Asn-164, Asn-165, and Asn-169 each carry an N-linked (GlcNAc...) asparagine glycan. Residues 173 to 193 (GILSLVVSFVLSSSLQFIINV) form a helical membrane-spanning segment. Residues 194–230 (TSASLLIYSLRRHIRKMQKNATGFWNPQTEAHVGAMK) lie on the Cytoplasmic side of the membrane. A helical membrane pass occupies residues 231–251 (LMIYFLILYIPYSVATLVQYL). At 252 to 262 (PFYAGMDMGTK) the chain is on the extracellular side. The helical transmembrane segment at 263–283 (SICLIFATLYSPGHSVLIIIT) threads the bilayer. Residues 284-299 (HPKLKTTAKKILCFKK) are Cytoplasmic-facing.

This sequence belongs to the G-protein coupled receptor T2R family.

It localises to the membrane. The protein localises to the cell projection. It is found in the cilium membrane. Its function is as follows. Gustducin-coupled receptor implicated in the perception of bitter compounds in the oral cavity and the gastrointestinal tract. Signals through PLCB2 and the calcium-regulated cation channel TRPM5. In airway epithelial cells, binding of denatonium increases the intracellular calcium ion concentration and stimulates ciliary beat frequency. This Papio hamadryas (Hamadryas baboon) protein is Taste receptor type 2 member 4 (TAS2R4).